Consider the following 20-residue polypeptide: Antimicrobial peptide AJN-10 (20 aa).

The protein localises to the secreted. Its function is as follows. Displays antimicrobial activity against the Gram-negative bacterium A.hydrophila. The protein is Antimicrobial peptide AJN-10 of Anguilla japonica (Japanese eel).